Reading from the N-terminus, the 151-residue chain is UPF0208 membrane protein PC1_2779 (151 aa).

A run of 2 helical transmembrane segments spans residues 46–66 (FGIR…IALG) and 69–89 (LGPA…GLWW).

The protein belongs to the UPF0208 family.

It is found in the cell inner membrane. The sequence is that of UPF0208 membrane protein PC1_2779 from Pectobacterium carotovorum subsp. carotovorum (strain PC1).